A 291-amino-acid chain; its full sequence is Kidney mitochondrial carrier protein 1 (291 aa).

N-acetylserine is present on S2. Solcar repeat units follow at residues 7-96 (KPFV…LKRL), 104-189 (ETLL…TKKH), and 198-289 (DTVA…LKKL). The next 6 helical transmembrane spans lie at 9–26 (FVYGGLASITAECGTFPI), 71–89 (GIAPAMLRQASYGTIKIGT), 106–124 (LLVNVVCGILSGVISSAIA), 164–183 (GVSLTAQRAAIVVGVELPVY), 204–224 (FLSSFTCGLVGALASNPVDVV), and 264–283 (GFWPNWLRLGPWNIIFFLTY).

It belongs to the mitochondrial carrier (TC 2.A.29) family. Interacts with VDAC1. In terms of tissue distribution, present in kidney (at protein level). Expressed predominantly within the kidney cortex in the proximal and distal tubules and at lower levels in the testis and white adipose tissue.

Its subcellular location is the mitochondrion inner membrane. The enzyme catalyses sulfite(in) + sulfate(out) = sulfite(out) + sulfate(in). It catalyses the reaction thiosulfate(in) + sulfate(out) = thiosulfate(out) + sulfate(in). The catalysed reaction is sulfate(out) + phosphate(in) = sulfate(in) + phosphate(out). It carries out the reaction oxalate(in) + sulfate(out) = oxalate(out) + sulfate(in). The enzyme catalyses malonate(in) + sulfate(out) = malonate(out) + sulfate(in). It catalyses the reaction maleate(in) + sulfate(out) = maleate(out) + sulfate(in). The catalysed reaction is (S)-malate(in) + sulfate(out) = (S)-malate(out) + sulfate(in). It carries out the reaction (3S)-citramalate(in) + sulfate(out) = (3S)-citramalate(out) + sulfate(in). The enzyme catalyses (3R)-citramalate(in) + sulfate(out) = (3R)-citramalate(out) + sulfate(in). It catalyses the reaction sulfate(out) + succinate(in) = sulfate(in) + succinate(out). The catalysed reaction is (S,S)-tartrate(in) + sulfate(out) = (S,S)-tartrate(out) + sulfate(in). It carries out the reaction (2R,3R)-tartrate(in) + sulfate(out) = (2R,3R)-tartrate(out) + sulfate(in). The enzyme catalyses D-aspartate(in) + sulfate(out) = D-aspartate(out) + sulfate(in). It catalyses the reaction L-aspartate(in) + sulfate(out) = L-aspartate(out) + sulfate(in). The catalysed reaction is sulfate(in) = sulfate(out). It carries out the reaction phosphate(in) = phosphate(out). The enzyme catalyses (S)-malate(out) = (S)-malate(in). In terms of biological role, antiporter that transports inorganic anions (sulfate, sulfite, thiosulfate and phosphate) and, to a lesser extent, a variety of dicarboxylates (e.g. malonate, malate and citramalate) and, even more so, aspartate. The sulfate/sulfate exchange is much higher than the phosphate/phosphate and malate/malate exchanges. The transport affinities is higher for sulfate and thiosulfate than for any other substrate. May catalyze the export of sulfite and thiosulfate (the hydrogen sulfide degradation products) from the mitochondria, thereby modulating the level of the hydrogen sulfide. Also may mediate a very low unidirectional transport of sulfate, phosphate and (S)-malate. The sequence is that of Kidney mitochondrial carrier protein 1 from Mus musculus (Mouse).